Consider the following 295-residue polypeptide: Protoheme IX farnesyltransferase (295 aa).

Helical transmembrane passes span 24–44, 45–65, 94–114, 117–137, 144–164, 171–191, 216–236, 240–260, and 272–292; these read IMYLVVFTAVAGMVTAPGSMH, PFLALISLICVALGSGSAGAI, SALEFGITLGILSVFIMAIAV, ISAALLAVSILFYVFIYTIWL, NIVIGGAAGAFPPMIGWAAVT, SFILFLVIFMWTPPHFWALSL, KYILIYSVLLVLTSLLPALFL, LLYLSMATFEGCVFIWYAVSV, and MFSYSISYLFSLFASIIFCSI.

The protein belongs to the UbiA prenyltransferase family. Protoheme IX farnesyltransferase subfamily.

It is found in the cell membrane. It carries out the reaction heme b + (2E,6E)-farnesyl diphosphate + H2O = Fe(II)-heme o + diphosphate. It participates in porphyrin-containing compound metabolism; heme O biosynthesis; heme O from protoheme: step 1/1. Its function is as follows. Converts heme B (protoheme IX) to heme O by substitution of the vinyl group on carbon 2 of heme B porphyrin ring with a hydroxyethyl farnesyl side group. This is Protoheme IX farnesyltransferase from Wolbachia pipientis wMel.